A 250-amino-acid polypeptide reads, in one-letter code: Uracil-DNA glycosylase (250 aa).

Catalysis depends on Asp-91, which acts as the Proton acceptor.

The protein belongs to the uracil-DNA glycosylase (UDG) superfamily. UNG family.

The protein resides in the host nucleus. It catalyses the reaction Hydrolyzes single-stranded DNA or mismatched double-stranded DNA and polynucleotides, releasing free uracil.. Excises uracil residues from the DNA which can arise as a result of misincorporation of dUMP residues by DNA polymerase or due to deamination of cytosine. Its function is as follows. Excises uracil residues from the DNA which can arise as a result of misincorporation of dUMP residues by DNA polymerase or deamination of cytosines. Therefore may reduce deleterious uracil incorporation into the viral genome, particularly in terminally differentiated cells which lack DNA repair enzymes. This Homo sapiens (Human) protein is Uracil-DNA glycosylase (UL114).